A 591-amino-acid polypeptide reads, in one-letter code: Developmental and secondary metabolism regulator VEA1 (591 aa).

The segment at 1 to 22 is disordered; sequence MATKASSILHPPNETEHTMSRI. Over residues 13 to 22 the composition is skewed to basic and acidic residues; that stretch reads NETEHTMSRI. Residues 26 to 235 form the Velvet domain; that stretch reads GKKLTYNLKV…AEQGCRVRIR (210 aa). Residues 40–45 carry the Nuclear localization signal motif; the sequence is ERARAC. Residues 238–547 are disordered; the sequence is VRMRRREPKP…TSGGSDDEIM (310 aa). Positions 245-260 are enriched in basic and acidic residues; that stretch reads PKPNKDYGAYDDRRIT. Residues 306 to 321 show a composition bias toward polar residues; it reads HQQPSPNLAATPQSHL. The span at 330–347 shows a compositional bias: pro residues; sequence YHAPPPPPTAHPAPPPAY. Residues 386–395 are compositionally biased toward polar residues; the sequence is YDQSKSSLPM. A compositionally biased stretch (low complexity) spans 422–433; the sequence is PSQLHPTQQYQQ. Pro residues predominate over residues 434-448; it reads PTPPPPPPAAIAPHP. The tract at residues 452–493 is PEST; sequence RTPTKPSPSTFFPPTPSRLSVEVDSSNEADDAILNAIRTRRG. Positions 494 to 516 are enriched in basic and acidic residues; it reads YILDEKSGATKRSRDSSDHDLKP.

It belongs to the velvet family. VeA subfamily. Component of the heterotrimeric velvet complex composed of LAE1, VEA1 and VEL2; VEA1 acting as a bridging protein between LAE1 and VEL2.

It is found in the nucleus. The protein resides in the cytoplasm. Its function is as follows. Component of the velvet transcription factor complex that controls sexual/asexual developmental ratio in response to light, promoting sexual development in the darkness while stimulating asexual sporulation under illumination. The velvet complex hat acts as a global regulator for secondary metabolite gene expression. Regulates cleistothecial formation and hyphal growth. Acts as a positive regulator of virulence. The chain is Developmental and secondary metabolism regulator VEA1 from Ajellomyces capsulatus (Darling's disease fungus).